We begin with the raw amino-acid sequence, 196 residues long: MEKFTIYTGTTVPLMNDNIDTDQILPKQFLKLIDKKGFGKYLMYSWRYKDNKYTEDPDFVFNRPEYRKATILITGDNFGAGSSREHAAWALADYGFKVVIAGSFGDIHYNNELNNGMLPIVQPIEVRRKLEQLKPTDEVTVDLEQQKIISPVGEFTFEIDGEWKHKLLNGLDDIGITMQYEDLITEYEKHRPSYWQ.

This sequence belongs to the LeuD family. LeuD type 1 subfamily. In terms of assembly, heterodimer of LeuC and LeuD.

The enzyme catalyses (2R,3S)-3-isopropylmalate = (2S)-2-isopropylmalate. It functions in the pathway amino-acid biosynthesis; L-leucine biosynthesis; L-leucine from 3-methyl-2-oxobutanoate: step 2/4. Functionally, catalyzes the isomerization between 2-isopropylmalate and 3-isopropylmalate, via the formation of 2-isopropylmaleate. The chain is 3-isopropylmalate dehydratase small subunit from Streptococcus thermophilus (strain CNRZ 1066).